The sequence spans 296 residues: Farnesyl diphosphate synthase (296 aa).

Lysine 46, arginine 49, and histidine 78 together coordinate isopentenyl diphosphate. Aspartate 85 and aspartate 91 together coordinate Mg(2+). Position 96 (arginine 96) interacts with (2E)-geranyl diphosphate. Arginine 97 is an isopentenyl diphosphate binding site. Lysine 182, threonine 183, glutamine 220, and lysine 237 together coordinate (2E)-geranyl diphosphate.

Belongs to the FPP/GGPP synthase family. Requires Mg(2+) as cofactor.

The protein localises to the cytoplasm. It catalyses the reaction isopentenyl diphosphate + (2E)-geranyl diphosphate = (2E,6E)-farnesyl diphosphate + diphosphate. The protein is Farnesyl diphosphate synthase (ispA) of Bacillus subtilis (strain 168).